The following is a 381-amino-acid chain: MYFSRNDLIQKEIAGLAPYAISSTNNGGRFYEEEEHSYRLPFQRDRDRVLHSSAFKRLQYKTQVFIFSVGENYRNRMTHTLEVAGLSRTIASALGLNSHLSESIALAHDLGHTPFGHAGQEILSSLMKDHGGFEHNKQSLRIVTSIEKKYPNFPGLNLCRETLKGLMKHGTEYDPSMMLLERKESGPSLEGMIADLSDEIAYTSHDIEDGWEMGYLHLGDLSENPFWKEVYEECKEQYKDVGEKILVRTAIRTLTNSMVSDLIQNISLQLETNQVKSTEDLIRLWKQGIRIASFSERVDSKFRELKFFLYEKLYRHEDLVRMSDYGKKVIESLFDYFLKHPEKIPDTYKERIEEESLYRVISDYVAGMTDRYAEKIYQSLH.

The HD domain occupies 76 to 203 (RMTHTLEVAG…ADLSDEIAYT (128 aa)).

Belongs to the dGTPase family. Type 2 subfamily.

The chain is Deoxyguanosinetriphosphate triphosphohydrolase-like protein from Leptospira borgpetersenii serovar Hardjo-bovis (strain JB197).